We begin with the raw amino-acid sequence, 4115 residues long: Transcription-associated protein 1 (4115 aa).

Polar residues predominate over residues M1–R11. Disordered regions lie at residues M1–P21 and E543–S563. The segment covering S544–S563 has biased composition (basic and acidic residues). TPR repeat units follow at residues L1341–L1374 and Q1820–P1853. The disordered stretch occupies residues L2678 to K2701. Positions L2808–S3421 constitute an FAT domain. A TPR 3 repeat occupies I2855–M2888. In terms of domain architecture, PI3K/PI4K catalytic spans E3740–D4100. Positions V3746 to V3752 are G-loop. Residues N3959–Q3967 form a catalytic loop region. Residues N3979–T4006 are activation loop. The 33-residue stretch at D4083–F4115 folds into the FATC domain.

Belongs to the PI3/PI4-kinase family. TRA1 subfamily.

It is found in the nucleus. Its function is as follows. Influences germ cell fate in hermaphrodites. Acts downstream of tra-2 and tra-3 and through the Tip60 histone acetyltransferase complex to regulate germ cell fate decisions. Required for spermatogenesis and embryonic development. Acts with tra-2 to promote expression of fog-3 and control male tail development. Involved in the negative regulation of vulval development. The polypeptide is Transcription-associated protein 1 (Caenorhabditis briggsae).